Here is a 139-residue protein sequence, read N- to C-terminus: Chemical-damaging agent resistance protein B (139 aa).

The protein belongs to the CAPAB/TerDEXZ family.

Functionally, not known; could confer methyl methane sulfonate (MMS), mitomycin C (MC), and UV resistance. The protein is Chemical-damaging agent resistance protein B of Clostridium acetobutylicum.